We begin with the raw amino-acid sequence, 143 residues long: Large ribosomal subunit protein uL13 (143 aa).

It belongs to the universal ribosomal protein uL13 family. As to quaternary structure, part of the 50S ribosomal subunit.

Functionally, this protein is one of the early assembly proteins of the 50S ribosomal subunit, although it is not seen to bind rRNA by itself. It is important during the early stages of 50S assembly. This Clostridioides difficile (strain 630) (Peptoclostridium difficile) protein is Large ribosomal subunit protein uL13.